Here is a 425-residue protein sequence, read N- to C-terminus: MTRLDSVERAVADIAAGKAVIVIDDEDRENEGDLIFAAEKATPEMVAFMVRYTSGYLCVPLDGAICDRLGLLPMYAVNQDKHGTAYTVTVDARNGIGTGISASDRATTMRLLADPTSVADDFTRPGHVVPLRAKDGGVLRRPGHTEAAVDLARMAGLQPAGAICEIVSQKDEGSMAHTDELRVFADEHGLALITIADLIEWRRKHEKHIERVAEARIPTRHGEFRAIGYTSIYEDVEHVALVRGEIAGPNADGDDVLVRVHSECLTGDVFGSRRCDCGPQLDAALAMVAREGRGVVLYMRGHEGRGIGLMHKLQAYQLQDAGADTVDANLKLGLPADARDYGIGAQILVDLGVRSMRLLTNNPAKRVGLDGYGLHIIERVPLPVRANAENIRYLMTKRDKLGHDLAGLDDFHESVHLPGEFGGAL.

Residues 1-204 (MTRLDSVERA…IADLIEWRRK (204 aa)) form a DHBP synthase region. D-ribulose 5-phosphate-binding positions include 28–29 (RE), Asp33, 141–145 (RPGHT), and Glu165. Glu29 is a Mg(2+) binding site. His144 lines the Mg(2+) pocket. The segment at 205–425 (HEKHIERVAE…HLPGEFGGAL (221 aa)) is GTP cyclohydrolase II. 259–263 (RVHSE) serves as a coordination point for GTP. Cys264, Cys275, and Cys277 together coordinate Zn(2+). GTP is bound by residues Gln280, 303 to 305 (EGR), and Thr325. Catalysis depends on Asp337, which acts as the Proton acceptor; for GTP cyclohydrolase activity. The active-site Nucleophile; for GTP cyclohydrolase activity is the Arg339. 2 residues coordinate GTP: Thr360 and Lys365.

In the N-terminal section; belongs to the DHBP synthase family. This sequence in the C-terminal section; belongs to the GTP cyclohydrolase II family. Mg(2+) serves as cofactor. Requires Mn(2+) as cofactor. Zn(2+) is required as a cofactor.

It catalyses the reaction D-ribulose 5-phosphate = (2S)-2-hydroxy-3-oxobutyl phosphate + formate + H(+). The catalysed reaction is GTP + 4 H2O = 2,5-diamino-6-hydroxy-4-(5-phosphoribosylamino)-pyrimidine + formate + 2 phosphate + 3 H(+). The protein operates within cofactor biosynthesis; riboflavin biosynthesis; 2-hydroxy-3-oxobutyl phosphate from D-ribulose 5-phosphate: step 1/1. Its pathway is cofactor biosynthesis; riboflavin biosynthesis; 5-amino-6-(D-ribitylamino)uracil from GTP: step 1/4. Functionally, catalyzes the conversion of D-ribulose 5-phosphate to formate and 3,4-dihydroxy-2-butanone 4-phosphate. Its function is as follows. Catalyzes the conversion of GTP to 2,5-diamino-6-ribosylamino-4(3H)-pyrimidinone 5'-phosphate (DARP), formate and pyrophosphate. This is Riboflavin biosynthesis protein RibBA from Mycobacterium bovis (strain ATCC BAA-935 / AF2122/97).